The chain runs to 351 residues: Dihydroorotate dehydrogenase (quinone) (351 aa).

FMN contacts are provided by residues 67 to 71 (AGFDK) and T91. K71 serves as a coordination point for substrate. Residue 116–120 (NAMGF) participates in substrate binding. FMN-binding residues include N145 and N178. N178 contacts substrate. Catalysis depends on S181, which acts as the Nucleophile. N183 provides a ligand contact to substrate. FMN contacts are provided by K214 and T242. 243–244 (NT) is a binding site for substrate. Residues G262, G291, and 312–313 (YS) each bind FMN.

This sequence belongs to the dihydroorotate dehydrogenase family. Type 2 subfamily. As to quaternary structure, monomer. FMN is required as a cofactor.

Its subcellular location is the cell membrane. The enzyme catalyses (S)-dihydroorotate + a quinone = orotate + a quinol. The protein operates within pyrimidine metabolism; UMP biosynthesis via de novo pathway; orotate from (S)-dihydroorotate (quinone route): step 1/1. In terms of biological role, catalyzes the conversion of dihydroorotate to orotate with quinone as electron acceptor. The protein is Dihydroorotate dehydrogenase (quinone) of Helicobacter pylori (strain P12).